The sequence spans 277 residues: Caspase-3 (277 aa).

Methionine 1 carries the post-translational modification N-acetylmethionine. 2 consecutive propeptides follow at residues methionine 1 to aspartate 9 and alanine 10 to aspartate 28. Lysine 11 is modified (N6-acetyllysine). Phosphoserine is present on serine 26. Residues histidine 121 and cysteine 163 contribute to the active site. Cysteine 163 is modified (S-nitrosocysteine; in inhibited form).

Belongs to the peptidase C14A family. In terms of assembly, heterotetramer that consists of two anti-parallel arranged heterodimers, each one formed by a 17 kDa (p17) and a 12 kDa (p12) subunit. Interacts with BIRC6/bruce. In terms of processing, cleavage by granzyme B, caspase-6, caspase-8 and caspase-10 generates the two active subunits. Additional processing of the propeptides is likely due to the autocatalytic activity of the activated protease. Active heterodimers between the small subunit of caspase-7 protease and the large subunit of caspase-3 also occur and vice versa. S-nitrosylated on its catalytic site cysteine in unstimulated cell lines and denitrosylated upon activation of the Fas apoptotic pathway, associated with an increase in intracellular caspase activity. Fas therefore activates caspase-3 not only by inducing the cleavage of the caspase zymogen to its active subunits, but also by stimulating the denitrosylation of its active site thiol. Post-translationally, ubiquitinated by BIRC6; this activity is inhibited by DIABLO/SMAC.

The protein localises to the cytoplasm. The enzyme catalyses Strict requirement for an Asp residue at positions P1 and P4. It has a preferred cleavage sequence of Asp-Xaa-Xaa-Asp-|- with a hydrophobic amino-acid residue at P2 and a hydrophilic amino-acid residue at P3, although Val or Ala are also accepted at this position.. Its activity is regulated as follows. Inhibited by BIRC6; following inhibition of BIRC6-caspase binding by DIABLO/SMAC, BIRC6 is subjected to caspase cleavage, leading to an increase in active caspases. Functionally, involved in the activation cascade of caspases responsible for apoptosis execution. At the onset of apoptosis, it proteolytically cleaves poly(ADP-ribose) polymerase PARP1 at a '216-Asp-|-Gly-217' bond. Cleaves and activates sterol regulatory element binding proteins (SREBPs) between the basic helix-loop-helix leucine zipper domain and the membrane attachment domain. Cleaves and activates caspase-6, -7 and -9 (CASP6, CASP7 and CASP9, respectively). Cleaves and inactivates interleukin-18 (IL18). Triggers cell adhesion in sympathetic neurons through RET cleavage. Cleaves IL-1 beta between an Asp and an Ala, releasing the mature cytokine which is involved in a variety of inflammatory processes. Cleaves and inhibits serine/threonine-protein kinase AKT1 in response to oxidative stress. Acts as an inhibitor of type I interferon production during virus-induced apoptosis by mediating cleavage of antiviral proteins CGAS, IRF3 and MAVS, thereby preventing cytokine overproduction. Also involved in pyroptosis by mediating cleavage and activation of gasdermin-E (GSDME). Cleaves XRCC4 and phospholipid scramblase proteins XKR4, XKR8 and XKR9, leading to promote phosphatidylserine exposure on apoptotic cell surface. Cleaves BIRC6 following inhibition of BIRC6-caspase binding by DIABLO/SMAC. In Felis catus (Cat), this protein is Caspase-3 (CASP3).